The primary structure comprises 130 residues: Early 3 receptor internalization and degradation beta protein (130 aa).

The signal sequence occupies residues 1–19 (MKRSVIFVLLIFCALPVLC). The helical transmembrane segment at 53-77 (AWLYAIISVMVFCSTIFALAIYPYL) threads the bilayer. A tyrosine-based sorting motif region spans residues 122 to 125 (YFNL).

The protein belongs to the adenoviridae E3_RID-beta family. As to quaternary structure, interacts with E3 RID-alpha and E3 CR1-alpha. Post-translationally, phosphorylated on serine. O-glycosylated, but not N-glycosylated.

Its subcellular location is the host membrane. Its function is as follows. Prevents infected cell apoptosis induced by the host immune system. Acts by down-regulating a number of cell surface receptors in the tumor necrosis factor (TNF) receptor superfamily, namely FAS, TNFRSF10A/TRAIL receptor 1, and TNFRSF10B/TRAIL receptor 2. Down-regulation of these death receptors protects adenovirus-infected cells from apoptosis induced by the death receptor ligands Fas ligand and TRAIL. RID complex also down-regulates certain tyrosine kinase cell surface receptors, especially the epidermal growth factor receptor (EGFR). RID-mediated Fas and EGFR down-regulation occurs via endocytosis of the receptors into endosomes followed by transport to and degradation within lysosomes. The sequence is that of Early 3 receptor internalization and degradation beta protein from Human adenovirus C serotype 2 (HAdV-2).